An 815-amino-acid chain; its full sequence is MEAHFVAAAAHSAAFGDRVGGESPYLSHIVLSERCMVNFGVPTFLLASGNNFYAEVQIRFHGCLQCTQWRRVFSVYAPSSAIDRILLPDVSSGNCGRSAPFRIMYDSGNSWGGLFISVPVFCDPEKLTFDGYTAVAVRLAICGSADEFYEMLFTYDELAQPQTRFYADAGRFDALALQICEYHIPAAWPSRRKEEFLNLRGRLLELIAARGSTRQLDKVLRADSYITHEQPLVPDPPKEDEAASEAKKKEADDAMKKLKDAAAKVASSDANRQREPGDREQGVSAALLSTCSGMPGDHHAPQHAAVAGAVKAVASGLNSIVRGLSAAGGAAATSASQLADIRYTDALLAGLEPPGRNRGEPRPQRRVPDLESVVMDDGQSRHDRVIPASGLGGARAPASVEECLKALCAIISDPGTPPQSAWTFGPISIVTHSCYNSGSPILIVTYSDGGRRAYPPIVSGITALSEALLAAGASFPSDLNEDEKAELLRKAPCFARPMAADEAREYQKLFSVDSEQVFLFGLQARVTTAMITALTVAVARATDQAADNLLLNQIVSYDLAVRDDDDLPGGRGQRDRLAVAQYDGDRAAGHWPAKLASQAADLIAWFCVNLQTESFATFARSGVWKAILTSLVAEDTLHRLPFLAPFHSDPAIYMFDYFRFGAGNMSRVTGDPNVIRFKPALRTGLMDCEFISGAASPAHPWAVHKFLPGQFHSYLCVGLNSELEGLLIFPGGFGLRFDLGETLDEVWDKNLDRAVLDRYSRLANISGGPPRADRGADCAIADVGCAYPYLKSAPRAPSDFSTTSTSGHESVTILY.

Disordered regions lie at residues 227–280 (THEQ…GDRE) and 795–815 (RAPS…TILY). Basic and acidic residues-rich tracts occupy residues 236–262 (PPKE…KDAA) and 271–280 (NRQREPGDRE). Residues 799-809 (DFSTTSTSGHE) are compositionally biased toward polar residues.

This sequence belongs to the herpesviridae CVC1 protein family. In terms of assembly, interacts (via C-terminus) with capsid vertex component 2/CVC2.

It localises to the virion. The protein resides in the host nucleus. Capsid vertex-specific component that plays a role during viral DNA encapsidation, assuring correct genome cleavage and presumably stabilizing capsids that contain full-length viral genomes. The protein is Capsid vertex component 1 of Amazona oratrix (yellow-headed parrot).